The primary structure comprises 251 residues: Tail tip protein L (251 aa).

Residues cysteine 184, cysteine 198, cysteine 221, and cysteine 228 each coordinate [4Fe-4S] cluster.

Belongs to the lambda-like tail tip protein L family. [4Fe-4S] cluster is required as a cofactor.

The protein localises to the virion. It is found in the host cytoplasm. Functionally, part of the distal tail tip complex which plays a role in DNA injection during entry, and in tail assembly initiation during exit. The tail tip complex is assembled successively with three tail central fiber proteins J, one tail tip protein I, one tail tip protein L and one tail tip protein K. The tail tip complex interacts with tail measure protein to initiate tail tube assembly. The formation of the tail tip complex is completed by the addition of tail tip protein M, which is followed by tail tube polymerization. The sequence is that of Tail tip protein L from Escherichia phage N15 (Bacteriophage N15).